A 301-amino-acid polypeptide reads, in one-letter code: Inosose dehydratase (301 aa).

This sequence belongs to the IolE/MocC family. Requires glutathione as cofactor. Co(2+) serves as cofactor. Mn(2+) is required as a cofactor.

The catalysed reaction is scyllo-inosose = 3D-3,5/4-trihydroxycyclohexane-1,2-dione + H2O. Catalyzes the dehydration of inosose (2-keto-myo-inositol, 2KMI or 2,4,6/3,5-pentahydroxycyclohexanone) to 3D-(3,5/4)-trihydroxycyclohexane-1,2-dione (D-2,3-diketo-4-deoxy-epi-inositol). The protein is Inosose dehydratase of Salmonella typhimurium (strain LT2 / SGSC1412 / ATCC 700720).